A 257-amino-acid polypeptide reads, in one-letter code: NAD-capped RNA hydrolase NudC (257 aa).

Substrate-binding residues include lysine 25 and arginine 69. Zn(2+) contacts are provided by cysteine 98 and cysteine 101. Glutamate 111 provides a ligand contact to substrate. Residues cysteine 116 and cysteine 119 each contribute to the Zn(2+) site. Tyrosine 124 provides a ligand contact to substrate. A Nudix hydrolase domain is found at 125–248 (PQIAPCIIVA…TVARRLIEDT (124 aa)). Positions 158, 174, and 178 each coordinate a divalent metal cation. The short motif at 159–180 (GFVEVGETLEQAVAREVMEESG) is the Nudix box element. A substrate-binding site is contributed by 192–199 (QPWPFPQS). Glutamate 219 serves as a coordination point for a divalent metal cation. Alanine 241 provides a ligand contact to substrate.

The protein belongs to the Nudix hydrolase family. NudC subfamily. In terms of assembly, homodimer. Mg(2+) serves as cofactor. Mn(2+) is required as a cofactor. The cofactor is Zn(2+).

It carries out the reaction a 5'-end NAD(+)-phospho-ribonucleoside in mRNA + H2O = a 5'-end phospho-adenosine-phospho-ribonucleoside in mRNA + beta-nicotinamide D-ribonucleotide + 2 H(+). The catalysed reaction is NAD(+) + H2O = beta-nicotinamide D-ribonucleotide + AMP + 2 H(+). The enzyme catalyses NADH + H2O = reduced beta-nicotinamide D-ribonucleotide + AMP + 2 H(+). MRNA decapping enzyme that specifically removes the nicotinamide adenine dinucleotide (NAD) cap from a subset of mRNAs by hydrolyzing the diphosphate linkage to produce nicotinamide mononucleotide (NMN) and 5' monophosphate mRNA. The NAD-cap is present at the 5'-end of some mRNAs and stabilizes RNA against 5'-processing. Has preference for mRNAs with a 5'-end purine. Catalyzes the hydrolysis of a broad range of dinucleotide pyrophosphates. The sequence is that of NAD-capped RNA hydrolase NudC from Escherichia coli O45:K1 (strain S88 / ExPEC).